Consider the following 396-residue polypeptide: Maltose/maltodextrin-binding periplasmic protein (396 aa).

The signal sequence occupies residues 1–26; sequence MKIKTGARILALSALTTMMFSASALA.

Belongs to the bacterial solute-binding protein 1 family. In terms of assembly, the complex is composed of two ATP-binding proteins (MalK), two transmembrane proteins (MalG and MalF) and a solute-binding protein (MalE).

The protein resides in the periplasm. In terms of biological role, part of the ABC transporter complex MalEFGK involved in maltose/maltodextrin import. Binds maltose and higher maltodextrins. The polypeptide is Maltose/maltodextrin-binding periplasmic protein (malE) (Escherichia coli O157:H7).